Reading from the N-terminus, the 178-residue chain is Glucagon-1 (178 aa).

An N-terminal signal peptide occupies residues 1 to 21 (MFGIHSLAGVLLLVIVQRQLA). 3 propeptides span residues 83–87 (SGAPS), 123–134 (ESAEESRNGPMS), and 171–178 (SNKRQEDH).

Belongs to the glucagon family.

The protein localises to the secreted. Promotes hydrolysis of glycogen and lipids, and raises the blood sugar level. This Oncorhynchus mykiss (Rainbow trout) protein is Glucagon-1 (gcg1).